Here is a 161-residue protein sequence, read N- to C-terminus: Protein-export protein SecB (161 aa).

The protein belongs to the SecB family. In terms of assembly, homotetramer, a dimer of dimers. One homotetramer interacts with 1 SecA dimer.

It localises to the cytoplasm. In terms of biological role, one of the proteins required for the normal export of preproteins out of the cell cytoplasm. It is a molecular chaperone that binds to a subset of precursor proteins, maintaining them in a translocation-competent state. It also specifically binds to its receptor SecA. The polypeptide is Protein-export protein SecB (Methylocella silvestris (strain DSM 15510 / CIP 108128 / LMG 27833 / NCIMB 13906 / BL2)).